We begin with the raw amino-acid sequence, 574 residues long: Cyclomaltodextrinase (574 aa).

The Ca(2+) site is built by asparagine 144, aspartate 146, asparagine 149, aspartate 150, glycine 168, and aspartate 170. 2 residues coordinate substrate: histidine 243 and arginine 323. The active-site Nucleophile is the aspartate 325. Glutamate 354 serves as the catalytic Proton donor. Residues 420–421 (HD), aspartate 465, and arginine 469 contribute to the substrate site.

The protein belongs to the glycosyl hydrolase 13 family. As to quaternary structure, monomer. Ca(2+) serves as cofactor.

The catalysed reaction is cyclomaltodextrin + H2O = linear maltodextrin. Hydrolyzes cyclodextrins. Can also act on linear maltodextrins, with the exception of maltose. In Thermoanaerobacter pseudethanolicus (strain ATCC 33223 / 39E) (Clostridium thermohydrosulfuricum), this protein is Cyclomaltodextrinase.